The primary structure comprises 366 residues: MRVDLFDFELPEAAIALRPASPRDASRLLVVRPGETLADRGVRDLPALLNPGDALVFNDTRVIPARLSGIRHRAGGTGQRCEAMLHLREAPDRWRAFARPAKRLAPGDRIRFGGEGANQGASEVCVLSGLDATVEERGEGGEILLRFDLAGPALDEAIAGLGALPLPPYIAGKRATDARDTTDYQTVYAREPGAVAAPTAGLHFSDALLDGIDAAGIERIHVTLHVGAGTFLPVKADDTEAHRMHAEIGILDTATAERLNAVRARGNRIVAVGTTALRLLESATDPDGTVRPFSGATDIFITPGYRFRAVDALVTNFHLPRSTLFMLVSAFSGLDTMRAAYAHAIASGYRFYSYGDASLLFPERAP.

Belongs to the QueA family. As to quaternary structure, monomer.

The protein localises to the cytoplasm. It catalyses the reaction 7-aminomethyl-7-carbaguanosine(34) in tRNA + S-adenosyl-L-methionine = epoxyqueuosine(34) in tRNA + adenine + L-methionine + 2 H(+). It functions in the pathway tRNA modification; tRNA-queuosine biosynthesis. Functionally, transfers and isomerizes the ribose moiety from AdoMet to the 7-aminomethyl group of 7-deazaguanine (preQ1-tRNA) to give epoxyqueuosine (oQ-tRNA). The sequence is that of S-adenosylmethionine:tRNA ribosyltransferase-isomerase from Methylorubrum populi (strain ATCC BAA-705 / NCIMB 13946 / BJ001) (Methylobacterium populi).